Reading from the N-terminus, the 248-residue chain is 1-(5-phosphoribosyl)-5-[(5-phosphoribosylamino)methylideneamino] imidazole-4-carboxamide isomerase (248 aa).

Aspartate 8 functions as the Proton acceptor in the catalytic mechanism. Aspartate 129 acts as the Proton donor in catalysis.

Belongs to the HisA/HisF family.

It is found in the cytoplasm. It carries out the reaction 1-(5-phospho-beta-D-ribosyl)-5-[(5-phospho-beta-D-ribosylamino)methylideneamino]imidazole-4-carboxamide = 5-[(5-phospho-1-deoxy-D-ribulos-1-ylimino)methylamino]-1-(5-phospho-beta-D-ribosyl)imidazole-4-carboxamide. The protein operates within amino-acid biosynthesis; L-histidine biosynthesis; L-histidine from 5-phospho-alpha-D-ribose 1-diphosphate: step 4/9. The protein is 1-(5-phosphoribosyl)-5-[(5-phosphoribosylamino)methylideneamino] imidazole-4-carboxamide isomerase of Rhizobium johnstonii (strain DSM 114642 / LMG 32736 / 3841) (Rhizobium leguminosarum bv. viciae).